Here is a 266-residue protein sequence, read N- to C-terminus: Putative cysteine-rich repeat secretory protein 20 (266 aa).

The N-terminal stretch at 1–33 (MYFPPSSVPKRLVLVHISAVVAIKLLLIRSVSS) is a signal peptide. 2 Gnk2-homologous domains span residues 40–142 (YLQH…SIRN) and 148–261 (YNNN…LYPF).

Belongs to the cysteine-rich repeat secretory protein family.

The protein localises to the secreted. This is Putative cysteine-rich repeat secretory protein 20 (CRRSP20) from Arabidopsis thaliana (Mouse-ear cress).